A 1429-amino-acid polypeptide reads, in one-letter code: DNA-directed RNA polymerase subunit beta' (1429 aa).

Positions 68, 70, 83, and 86 each coordinate Zn(2+). Positions 459, 461, and 463 each coordinate Mg(2+). Residues Cys805, Cys879, Cys886, and Cys889 each coordinate Zn(2+). Residues 1407–1429 (ESFPLLGGDGEPASTTSSTTEGE) form a disordered region. Residues 1419-1429 (ASTTSSTTEGE) are compositionally biased toward polar residues.

Belongs to the RNA polymerase beta' chain family. As to quaternary structure, the RNAP catalytic core consists of 2 alpha, 1 beta, 1 beta' and 1 omega subunit. When a sigma factor is associated with the core the holoenzyme is formed, which can initiate transcription. Requires Mg(2+) as cofactor. Zn(2+) is required as a cofactor.

The enzyme catalyses RNA(n) + a ribonucleoside 5'-triphosphate = RNA(n+1) + diphosphate. Functionally, DNA-dependent RNA polymerase catalyzes the transcription of DNA into RNA using the four ribonucleoside triphosphates as substrates. In Rhodopirellula baltica (strain DSM 10527 / NCIMB 13988 / SH1), this protein is DNA-directed RNA polymerase subunit beta'.